A 315-amino-acid chain; its full sequence is 4-diphosphocytidyl-2-C-methyl-D-erythritol kinase (315 aa).

Lys26 is a catalytic residue. 111–121 (PLAGGLAGGSA) contacts ATP. The active site involves Asp153.

The protein belongs to the GHMP kinase family. IspE subfamily.

It catalyses the reaction 4-CDP-2-C-methyl-D-erythritol + ATP = 4-CDP-2-C-methyl-D-erythritol 2-phosphate + ADP + H(+). The protein operates within isoprenoid biosynthesis; isopentenyl diphosphate biosynthesis via DXP pathway; isopentenyl diphosphate from 1-deoxy-D-xylulose 5-phosphate: step 3/6. Its function is as follows. Catalyzes the phosphorylation of the position 2 hydroxy group of 4-diphosphocytidyl-2C-methyl-D-erythritol. The sequence is that of 4-diphosphocytidyl-2-C-methyl-D-erythritol kinase from Salinispora tropica (strain ATCC BAA-916 / DSM 44818 / JCM 13857 / NBRC 105044 / CNB-440).